A 105-amino-acid polypeptide reads, in one-letter code: UPF0060 membrane protein Reut_B3679 (105 aa).

4 helical membrane passes run 4–24, 28–48, 60–80, and 82–102; these read IALY…PYLW, GASA…AWLL, AAYG…VDGV, and PSAW…IIVF.

It belongs to the UPF0060 family.

It localises to the cell inner membrane. This Cupriavidus pinatubonensis (strain JMP 134 / LMG 1197) (Cupriavidus necator (strain JMP 134)) protein is UPF0060 membrane protein Reut_B3679.